Here is a 212-residue protein sequence, read N- to C-terminus: Pyridoxine/pyridoxamine 5'-phosphate oxidase (212 aa).

Residues 8-11 and lysine 66 each bind substrate; that span reads RREY. FMN contacts are provided by residues 61-66, 76-77, arginine 82, lysine 83, and glutamine 105; these read RIVLLK and FT. Substrate-binding residues include tyrosine 123, arginine 127, and serine 131. Residues 140–141 and tryptophan 185 each bind FMN; that span reads QS. A substrate-binding site is contributed by 191 to 193; that stretch reads RLH. Arginine 195 is an FMN binding site.

Belongs to the pyridoxamine 5'-phosphate oxidase family. Homodimer. FMN is required as a cofactor.

It carries out the reaction pyridoxamine 5'-phosphate + O2 + H2O = pyridoxal 5'-phosphate + H2O2 + NH4(+). The enzyme catalyses pyridoxine 5'-phosphate + O2 = pyridoxal 5'-phosphate + H2O2. It functions in the pathway cofactor metabolism; pyridoxal 5'-phosphate salvage; pyridoxal 5'-phosphate from pyridoxamine 5'-phosphate: step 1/1. It participates in cofactor metabolism; pyridoxal 5'-phosphate salvage; pyridoxal 5'-phosphate from pyridoxine 5'-phosphate: step 1/1. Catalyzes the oxidation of either pyridoxine 5'-phosphate (PNP) or pyridoxamine 5'-phosphate (PMP) into pyridoxal 5'-phosphate (PLP). This is Pyridoxine/pyridoxamine 5'-phosphate oxidase from Shewanella halifaxensis (strain HAW-EB4).